The following is a 673-amino-acid chain: Pesticin receptor (673 aa).

The N-terminal stretch at 1–22 is a signal peptide; the sequence is MKMTRLYPLALGGLLLPAIANA. Residues 30–37 carry the TonB box motif; that stretch reads STLVVTAS. The 115-residue stretch at 41–155 folds into the TBDR plug domain; the sequence is SRSASANNVS…QGGIINIVTQ (115 aa). One can recognise a TBDR beta-barrel domain in the interval 160 to 672; sequence TPRGYIEGGV…TVGINTRIDF (513 aa). The TonB C-terminal box signature appears at 657–673; the sequence is QVNMGRTVGINTRIDFF.

Belongs to the TonB-dependent receptor family.

It is found in the cell outer membrane. In terms of biological role, receptor for the bacteriocin pesticin and for the siderophore yersiniabactin. This chain is Pesticin receptor (fyuA), found in Yersinia pestis.